The sequence spans 128 residues: Sulfurtransferase TusD (128 aa).

Catalysis depends on Cys78, which acts as the Cysteine persulfide intermediate.

It belongs to the DsrE/TusD family. In terms of assembly, heterohexamer, formed by a dimer of trimers. The hexameric TusBCD complex contains 2 copies each of TusB, TusC and TusD. The TusBCD complex interacts with TusE.

It is found in the cytoplasm. Its function is as follows. Part of a sulfur-relay system required for 2-thiolation of 5-methylaminomethyl-2-thiouridine (mnm(5)s(2)U) at tRNA wobble positions. Accepts sulfur from TusA and transfers it in turn to TusE. This Enterobacter sp. (strain 638) protein is Sulfurtransferase TusD.